The sequence spans 556 residues: Calcium-dependent protein kinase 5 (556 aa).

Positions Met1 to Pro40 are disordered. Residue Gly2 is the site of N-myristoyl glycine attachment. The span at Ser8–Ser25 shows a compositional bias: basic and acidic residues. Positions Lys26–Ser39 are enriched in low complexity. The Protein kinase domain maps to Tyr97–Ile355. Residues Leu103–Thr111 and Lys126 contribute to the ATP site. Residue Asp221 is the Proton acceptor of the active site. Ser261 is modified (phosphoserine). Residues Ala361–Ile391 form an autoinhibitory domain region. 4 consecutive EF-hand domains span residues Glu398–Thr433, Leu434–Leu469, Glu470–Ala505, and Leu509–Gly539. Asp411, Asp413, Ser415, Glu422, Asp447, Asp449, Ser451, Thr453, Glu458, Asp483, Asp485, Ser487, Glu494, Asp517, Asn519, Asp521, Lys523, and Glu528 together coordinate Ca(2+).

The protein belongs to the protein kinase superfamily. Ser/Thr protein kinase family. CDPK subfamily.

It localises to the membrane. It carries out the reaction L-seryl-[protein] + ATP = O-phospho-L-seryl-[protein] + ADP + H(+). The enzyme catalyses L-threonyl-[protein] + ATP = O-phospho-L-threonyl-[protein] + ADP + H(+). With respect to regulation, activated by calcium. Autophosphorylation may play an important role in the regulation of the kinase activity. May play a role in signal transduction pathways that involve calcium as a second messenger. The sequence is that of Calcium-dependent protein kinase 5 (CPK5) from Arabidopsis thaliana (Mouse-ear cress).